The following is a 155-amino-acid chain: Ribosomal RNA large subunit methyltransferase H (155 aa).

S-adenosyl-L-methionine is bound by residues Leu-72, Gly-103, and 122–127 (FGRMVW).

The protein belongs to the RNA methyltransferase RlmH family. In terms of assembly, homodimer.

It localises to the cytoplasm. It carries out the reaction pseudouridine(1915) in 23S rRNA + S-adenosyl-L-methionine = N(3)-methylpseudouridine(1915) in 23S rRNA + S-adenosyl-L-homocysteine + H(+). Functionally, specifically methylates the pseudouridine at position 1915 (m3Psi1915) in 23S rRNA. In Paracoccus denitrificans (strain Pd 1222), this protein is Ribosomal RNA large subunit methyltransferase H.